The following is a 154-amino-acid chain: Interleukin-7 (154 aa).

The first 25 residues, Met1 to Ser25, serve as a signal peptide directing secretion. Intrachain disulfides connect Cys27–Cys145, Cys58–Cys133, and Cys71–Cys116. 2 N-linked (GlcNAc...) asparagine glycosylation sites follow: Asn94 and Asn115.

The protein belongs to the IL-7/IL-9 family. As to quaternary structure, interacts with IL7R and CSF2RG. Three disulfide bonds are present.

The protein localises to the secreted. Functionally, hematopoietic cytokine that plays an essential role in the development, expansion, and survival of naive and memory T-cells and B-cells thereby regulating the number of mature lymphocytes and maintaining lymphoid homeostasis. Mechanistically, exerts its biological effects through a receptor composed of IL7RA subunit and the cytokine receptor common subunit gamma/CSF2RG. Binding to the receptor leads to activation of various kinases including JAK1 or JAK3 depending on the cell type and subsequently propagation of signals through activation of several downstream signaling pathways including the PI3K/Akt/mTOR or the JAK-STAT5. The chain is Interleukin-7 (Il7) from Rattus norvegicus (Rat).